Reading from the N-terminus, the 496-residue chain is UDP-N-acetylmuramoylalanine--D-glutamate ligase (496 aa).

Residue glycine 130–threonine 136 coordinates ATP.

The protein belongs to the MurCDEF family. Interacts with PknA. Phosphorylated by PknA.

The protein localises to the cytoplasm. The enzyme catalyses UDP-N-acetyl-alpha-D-muramoyl-L-alanine + D-glutamate + ATP = UDP-N-acetyl-alpha-D-muramoyl-L-alanyl-D-glutamate + ADP + phosphate + H(+). The protein operates within cell wall biogenesis; peptidoglycan biosynthesis. Its function is as follows. Cell wall formation. Catalyzes the addition of glutamate to the nucleotide precursor UDP-N-acetylmuramoyl-L-alanine (UMA). The polypeptide is UDP-N-acetylmuramoylalanine--D-glutamate ligase (Mycobacterium tuberculosis (strain ATCC 25177 / H37Ra)).